The following is a 373-amino-acid chain: Anhydro-N-acetylmuramic acid kinase (373 aa).

Residue 13-20 (GTSMDGID) participates in ATP binding.

The protein belongs to the anhydro-N-acetylmuramic acid kinase family.

The catalysed reaction is 1,6-anhydro-N-acetyl-beta-muramate + ATP + H2O = N-acetyl-D-muramate 6-phosphate + ADP + H(+). Its pathway is amino-sugar metabolism; 1,6-anhydro-N-acetylmuramate degradation. The protein operates within cell wall biogenesis; peptidoglycan recycling. Its function is as follows. Catalyzes the specific phosphorylation of 1,6-anhydro-N-acetylmuramic acid (anhMurNAc) with the simultaneous cleavage of the 1,6-anhydro ring, generating MurNAc-6-P. Is required for the utilization of anhMurNAc either imported from the medium or derived from its own cell wall murein, and thus plays a role in cell wall recycling. The protein is Anhydro-N-acetylmuramic acid kinase of Agrobacterium fabrum (strain C58 / ATCC 33970) (Agrobacterium tumefaciens (strain C58)).